The primary structure comprises 636 residues: Beta-galactosidase-1-like protein 2 (636 aa).

Positions 1 to 32 are cleaved as a signal peptide; the sequence is MTTWSLRRRPARTLGLLLLVVLGFLVLRRLDW. The active-site Proton donor is the Glu201. Residue Glu277 is the Nucleophile of the active site.

Belongs to the glycosyl hydrolase 35 family.

Its subcellular location is the secreted. The protein is Beta-galactosidase-1-like protein 2 (GLB1L2) of Homo sapiens (Human).